The chain runs to 340 residues: Glycerol-3-phosphate dehydrogenase [NAD(P)+] (340 aa).

Positions 15, 16, 36, and 110 each coordinate NADPH. Sn-glycerol 3-phosphate contacts are provided by Lys110, Gly139, and Thr141. An NADPH-binding site is contributed by Ala143. Sn-glycerol 3-phosphate contacts are provided by Lys196, Asp249, Ser259, Arg260, and Asn261. Residue Lys196 is the Proton acceptor of the active site. Arg260 serves as a coordination point for NADPH. Residues Val284 and Glu286 each contribute to the NADPH site.

This sequence belongs to the NAD-dependent glycerol-3-phosphate dehydrogenase family.

It localises to the cytoplasm. It carries out the reaction sn-glycerol 3-phosphate + NAD(+) = dihydroxyacetone phosphate + NADH + H(+). The enzyme catalyses sn-glycerol 3-phosphate + NADP(+) = dihydroxyacetone phosphate + NADPH + H(+). The protein operates within membrane lipid metabolism; glycerophospholipid metabolism. Catalyzes the reduction of the glycolytic intermediate dihydroxyacetone phosphate (DHAP) to sn-glycerol 3-phosphate (G3P), the key precursor for phospholipid synthesis. In Serratia marcescens, this protein is Glycerol-3-phosphate dehydrogenase [NAD(P)+].